Consider the following 266-residue polypeptide: U2 small nuclear ribonucleoprotein A' (266 aa).

4 LRR repeats span residues I30–A51, P53–D74, D75–P95, and K97–S118. The LRRCT domain maps to N132–D170.

This sequence belongs to the U2 small nuclear ribonucleoprotein A family. Associated with the spliceosome.

It is found in the nucleus. Involved in pre-mRNA splicing. The protein is U2 small nuclear ribonucleoprotein A' (LEA1) of Candida glabrata (strain ATCC 2001 / BCRC 20586 / JCM 3761 / NBRC 0622 / NRRL Y-65 / CBS 138) (Yeast).